The chain runs to 467 residues: ATP synthase subunit beta (467 aa).

Residue 154-161 coordinates ATP; that stretch reads GGAGVGKT.

This sequence belongs to the ATPase alpha/beta chains family. F-type ATPases have 2 components, CF(1) - the catalytic core - and CF(0) - the membrane proton channel. CF(1) has five subunits: alpha(3), beta(3), gamma(1), delta(1), epsilon(1). CF(0) has three main subunits: a(1), b(2) and c(9-12). The alpha and beta chains form an alternating ring which encloses part of the gamma chain. CF(1) is attached to CF(0) by a central stalk formed by the gamma and epsilon chains, while a peripheral stalk is formed by the delta and b chains.

It is found in the cell inner membrane. The enzyme catalyses ATP + H2O + 4 H(+)(in) = ADP + phosphate + 5 H(+)(out). Its function is as follows. Produces ATP from ADP in the presence of a proton gradient across the membrane. The catalytic sites are hosted primarily by the beta subunits. This chain is ATP synthase subunit beta, found in Petrotoga mobilis (strain DSM 10674 / SJ95).